Here is a 622-residue protein sequence, read N- to C-terminus: DNA topoisomerase 3 (622 aa).

Positions 2–148 (RVLCVAEKNS…SIQVIRADFN (147 aa)) constitute a Toprim domain. The Topo IA-type catalytic domain maps to 166 to 596 (SKNAADAVDA…MILTQFRDVF (431 aa)). The O-(5'-phospho-DNA)-tyrosine intermediate role is filled by tyrosine 330.

The protein belongs to the type IA topoisomerase family. In terms of assembly, interacts with hus2.

It carries out the reaction ATP-independent breakage of single-stranded DNA, followed by passage and rejoining.. Releases the supercoiling and torsional tension of DNA introduced during the DNA replication and transcription by transiently cleaving and rejoining one strand of the DNA duplex. Introduces a single-strand break via transesterification at a target site in duplex DNA. The scissile phosphodiester is attacked by the catalytic tyrosine of the enzyme, resulting in the formation of a DNA-(5'-phosphotyrosyl)-enzyme intermediate and the expulsion of a 3'-OH DNA strand. The free DNA strand than undergoes passage around the unbroken strand thus removing DNA supercoils. Finally, in the religation step, the DNA 3'-OH attacks the covalent intermediate to expel the active-site tyrosine and restore the DNA phosphodiester backbone. This chain is DNA topoisomerase 3 (top3), found in Schizosaccharomyces pombe (strain 972 / ATCC 24843) (Fission yeast).